The primary structure comprises 357 residues: CD4+ T-cell-stimulating antigen (357 aa).

A signal peptide spans 1-22 (MKKRTFALALSMIIASGVILGA). Residue cysteine 23 is the site of N-palmitoyl cysteine attachment. Cysteine 23 is lipidated: S-diacylglycerol cysteine.

Belongs to the BMP lipoprotein family.

It localises to the cell membrane. The protein is CD4+ T-cell-stimulating antigen (tcsA) of Listeria monocytogenes serovar 1/2a (strain ATCC BAA-679 / EGD-e).